Reading from the N-terminus, the 324-residue chain is o-succinylbenzoate synthase (324 aa).

The active-site Proton donor is lysine 135. 3 residues coordinate Mg(2+): aspartate 163, glutamate 192, and aspartate 215. Lysine 237 (proton acceptor) is an active-site residue.

Belongs to the mandelate racemase/muconate lactonizing enzyme family. MenC type 1 subfamily. It depends on a divalent metal cation as a cofactor.

It catalyses the reaction (1R,6R)-6-hydroxy-2-succinyl-cyclohexa-2,4-diene-1-carboxylate = 2-succinylbenzoate + H2O. It functions in the pathway quinol/quinone metabolism; 1,4-dihydroxy-2-naphthoate biosynthesis; 1,4-dihydroxy-2-naphthoate from chorismate: step 4/7. Its pathway is quinol/quinone metabolism; menaquinone biosynthesis. Functionally, converts 2-succinyl-6-hydroxy-2,4-cyclohexadiene-1-carboxylate (SHCHC) to 2-succinylbenzoate (OSB). This chain is o-succinylbenzoate synthase, found in Aliivibrio fischeri (strain MJ11) (Vibrio fischeri).